Consider the following 110-residue polypeptide: Large ribosomal subunit protein uL22 (110 aa).

The protein belongs to the universal ribosomal protein uL22 family. Part of the 50S ribosomal subunit.

Its function is as follows. This protein binds specifically to 23S rRNA; its binding is stimulated by other ribosomal proteins, e.g. L4, L17, and L20. It is important during the early stages of 50S assembly. It makes multiple contacts with different domains of the 23S rRNA in the assembled 50S subunit and ribosome. Functionally, the globular domain of the protein is located near the polypeptide exit tunnel on the outside of the subunit, while an extended beta-hairpin is found that lines the wall of the exit tunnel in the center of the 70S ribosome. The sequence is that of Large ribosomal subunit protein uL22 from Marinobacter nauticus (strain ATCC 700491 / DSM 11845 / VT8) (Marinobacter aquaeolei).